The chain runs to 701 residues: Polyribonucleotide nucleotidyltransferase (701 aa).

2 residues coordinate Mg(2+): Asp490 and Asp496. The KH domain occupies 557 to 616 (PKVETMTIKPEKIRDVIGPGGKKINEIIDETGVKLDIEQDGTIFIGAVDQDMINRAREII). Residues 626–694 (GQVYNAKVRR…DKGRVNASHR (69 aa)) form the S1 motif domain.

Belongs to the polyribonucleotide nucleotidyltransferase family. The cofactor is Mg(2+).

The protein resides in the cytoplasm. It catalyses the reaction RNA(n+1) + phosphate = RNA(n) + a ribonucleoside 5'-diphosphate. Functionally, involved in mRNA degradation. Catalyzes the phosphorolysis of single-stranded polyribonucleotides processively in the 3'- to 5'-direction. This is Polyribonucleotide nucleotidyltransferase from Staphylococcus carnosus (strain TM300).